A 248-amino-acid chain; its full sequence is Homeobox protein BarH-like 1 (248 aa).

Positions 135–194 form a DNA-binding region, homeobox; sequence GRRSRTVFTELQLMGLEKRFEKQKYLSTPDRIDLAESLGLSQLQVKTWYQNRRMKWKKIV. The segment at 197–248 is disordered; it reads GGGLESPTKPKGRPKKNSIPTSEQLSEQERTREADRLSDGGASSLSDANQEE. A compositionally biased stretch (basic and acidic residues) spans 223-234; the sequence is EQERTREADRLS. The segment covering 237–248 has biased composition (polar residues); sequence GASSLSDANQEE.

Belongs to the BAR homeobox family.

It is found in the nucleus. Functionally, transcription factor, is involved in craniofacial development, and in stomach organogenesis. In Danio rerio (Zebrafish), this protein is Homeobox protein BarH-like 1 (barx1).